Consider the following 428-residue polypeptide: MAIQIPRGTQDILPGDVETWQWIEQKAYDLCRRYNYQEIRVPMFEHTELFLRGVGDTTDIVQKEMYTFEDRGGRSLTLRPEGTASVTRAYVSNKLYGQANQPTKLFYIGPMFRYERPQSGRMRQFVQFGVEALGSADPAIDAEVLALVMRFYEELGLKNLKLVINSLGDTDSRLAHREALVNHFKPRIHEFCNDCQDRLEKNPLRILDCKKDRDHELMGTAPSIHDYLSTESKAYFEKVQSYLTALNIPFVVDATLVRGLDYYNHTAFEVMVDGEGFGAITTLCGGGRYNGLVEEIGGPETPGIGFALSIERAIMALEAQQAKPAHNQAIDCYVVTLGEAAKDKGVELVYQLRNAGISAEKDYLDRKMKGQLKAADRLHAKWTVILGEDELAVGKVNVKNMETGEQTDVALTDLVSHMKQQVEGGNES.

It belongs to the class-II aminoacyl-tRNA synthetase family. As to quaternary structure, homodimer.

The protein resides in the cytoplasm. It catalyses the reaction tRNA(His) + L-histidine + ATP = L-histidyl-tRNA(His) + AMP + diphosphate + H(+). This Halalkalibacterium halodurans (strain ATCC BAA-125 / DSM 18197 / FERM 7344 / JCM 9153 / C-125) (Bacillus halodurans) protein is Histidine--tRNA ligase.